A 443-amino-acid chain; its full sequence is ATP-dependent protease ATPase subunit HslU (443 aa).

ATP contacts are provided by residues I18 and 60–65 (GVGKTE). Positions 137 to 156 (PPPRDAWGQNEQSEDTSNTR) are disordered. Polar residues predominate over residues 145-156 (QNEQSEDTSNTR). ATP-binding residues include D256, E321, and R393.

The protein belongs to the ClpX chaperone family. HslU subfamily. A double ring-shaped homohexamer of HslV is capped on each side by a ring-shaped HslU homohexamer. The assembly of the HslU/HslV complex is dependent on binding of ATP.

Its subcellular location is the cytoplasm. Its function is as follows. ATPase subunit of a proteasome-like degradation complex; this subunit has chaperone activity. The binding of ATP and its subsequent hydrolysis by HslU are essential for unfolding of protein substrates subsequently hydrolyzed by HslV. HslU recognizes the N-terminal part of its protein substrates and unfolds these before they are guided to HslV for hydrolysis. This Vibrio vulnificus (strain YJ016) protein is ATP-dependent protease ATPase subunit HslU.